The chain runs to 722 residues: Formin-like protein 16 (722 aa).

Disordered regions lie at residues 1–56, 564–606, 635–672, and 690–722; these read MSPV…PMFD, ATED…PSRP, VGSP…HLSH, and PLLV…LRYQ. The span at 22–55 shows a compositional bias: pro residues; the sequence is PLPPPPPPPMRRSAPSPPPMSGRVPPPPPPPPMF. Residues 182-571 form the FH2 domain; the sequence is FRCPVTKRSS…KAATEDVFGG (390 aa). 3 stretches are compositionally biased toward pro residues: residues 593–605, 638–658, and 709–722; these read IRPP…PPSR, PSPP…PPPM, and APPP…LRYQ.

It belongs to the formin-like family. Class-II subfamily.

This chain is Formin-like protein 16 (FH16), found in Arabidopsis thaliana (Mouse-ear cress).